Consider the following 269-residue polypeptide: Tryptophan synthase alpha chain (269 aa).

Active-site proton acceptor residues include E49 and D60.

It belongs to the TrpA family. Tetramer of two alpha and two beta chains.

The enzyme catalyses (1S,2R)-1-C-(indol-3-yl)glycerol 3-phosphate + L-serine = D-glyceraldehyde 3-phosphate + L-tryptophan + H2O. It functions in the pathway amino-acid biosynthesis; L-tryptophan biosynthesis; L-tryptophan from chorismate: step 5/5. The alpha subunit is responsible for the aldol cleavage of indoleglycerol phosphate to indole and glyceraldehyde 3-phosphate. The sequence is that of Tryptophan synthase alpha chain from Pseudomonas putida (strain W619).